We begin with the raw amino-acid sequence, 180 residues long: Large ribosomal subunit protein uL5 (180 aa).

Belongs to the universal ribosomal protein uL5 family. Part of the 50S ribosomal subunit; part of the 5S rRNA/L5/L18/L25 subcomplex. Contacts the 5S rRNA and the P site tRNA. Forms a bridge to the 30S subunit in the 70S ribosome.

Functionally, this is one of the proteins that bind and probably mediate the attachment of the 5S RNA into the large ribosomal subunit, where it forms part of the central protuberance. In the 70S ribosome it contacts protein S13 of the 30S subunit (bridge B1b), connecting the 2 subunits; this bridge is implicated in subunit movement. Contacts the P site tRNA; the 5S rRNA and some of its associated proteins might help stabilize positioning of ribosome-bound tRNAs. The sequence is that of Large ribosomal subunit protein uL5 from Lacticaseibacillus casei (strain BL23) (Lactobacillus casei).